We begin with the raw amino-acid sequence, 120 residues long: Dihydroneopterin aldolase (120 aa).

Substrate-binding residues include Glu-20 and Met-114.

This sequence belongs to the archaeal dihydroneopterin aldolase family. As to quaternary structure, homotetramer.

The enzyme catalyses 7,8-dihydroneopterin = 6-hydroxymethyl-7,8-dihydropterin + glycolaldehyde. Catalyzes the conversion of 7,8-dihydroneopterin (H2Neo) to 6-hydroxymethyl-7,8-dihydropterin (6-HMD). The sequence is that of Dihydroneopterin aldolase from Picrophilus torridus (strain ATCC 700027 / DSM 9790 / JCM 10055 / NBRC 100828 / KAW 2/3).